The following is a 204-amino-acid chain: Histone chaperone ASF1A (204 aa).

The segment at 1–156 is interaction with histone H3, CHAF1B, and HIRA; sequence MAKVQVNNVV…TRFHINWEDN (156 aa). The Required for interaction with HIRA signature appears at 31 to 37; sequence IEDLSED. Positions 155–204 are required for interaction with HIRA; it reads DNTEKLEDAESSNPNLQSLLSTDALPSASKGWSTSENSLNVMLESHMDCM. Ser192 bears the Phosphoserine mark.

The protein belongs to the ASF1 family. In terms of assembly, interacts with histone H3 (via C-terminus), including histone H3.1, H3.2 and H3.3, and histone H4; the interaction with H3 is direct. Probably interacts with the heterodimeric form of H3-H4 taking the place of the second dimer. Interacts with the CHAF1A, CHAF1B and RBBP4 subunits of the CAF-1 complex. Interacts with CABIN1, HAT1, HIRA, NASP, TAF1 and UBN1. Found in a soluble complex with NASP and histones H3 and H4; the interaction with NASP is probably indirect and mediated by H3-H4. Interacts with CDAN1. Found in a cytosolic complex with IPO4 and histones H3 and H4. Interacts with CREBBP. Phosphorylated by TLK1 and TLK2. Highly phosphorylated in S-phase and at lower levels in M-phase. TLK2-mediated phosphorylation at Ser-192 prevents proteasome-dependent degradation. Phosphorylation at Ser-192 by PRKDC in response to DNA damage promotes the histone chaperone activity and ability to replace histones at double-strand breaks (DSBs) at stalled or collapsed replication forks, leading to RAD51 recruitment.

It localises to the nucleus. The protein localises to the chromosome. Histone chaperone that facilitates histone deposition and histone exchange and removal during nucleosome assembly and disassembly. Cooperates with chromatin assembly factor 1 (CAF-1) to promote replication-dependent chromatin assembly and with HIRA to promote replication-independent chromatin assembly. Promotes homologous recombination-mediated repair of double-strand breaks (DSBs) at stalled or collapsed replication forks: acts by mediating histone replacement at DSBs, leading to recruitment of the MMS22L-TONSL complex and subsequent loading of RAD51. Also involved in the nuclear import of the histone H3-H4 dimer together with importin-4 (IPO4): specifically recognizes and binds newly synthesized histones with the monomethylation of H3 'Lys-9' and acetylation at 'Lys-14' (H3K9me1K14ac) marks, and diacetylation at 'Lys-5' and 'Lys-12' of H4 (H4K5K12ac) marks in the cytosol. Required for the formation of senescence-associated heterochromatin foci (SAHF) and efficient senescence-associated cell cycle exit. The chain is Histone chaperone ASF1A from Mus musculus (Mouse).